Reading from the N-terminus, the 350-residue chain is B1 bradykinin receptor (350 aa).

Residues 1–41 lie on the Extracellular side of the membrane; it reads MASRAPLELLPLNRSQLSPPNATTCDDAPEAWDLLHRVLPS. N-linked (GlcNAc...) asparagine glycans are attached at residues asparagine 13 and asparagine 21. The chain crosses the membrane as a helical span at residues 42–62; sequence VIIIICVCGLLGNLLVLAVLL. Residues 63–72 lie on the Cytoplasmic side of the membrane; that stretch reads RPRRRLNVAE. The chain crosses the membrane as a helical span at residues 73-93; sequence MYLANLAASDLVFVLGLPFWA. Over 94-110 the chain is Extracellular; that stretch reads ANISNQFRWPFGGLLCR. N-linked (GlcNAc...) asparagine glycosylation occurs at asparagine 95. Cysteine 109 and cysteine 186 are oxidised to a cystine. Residues 111–131 form a helical membrane-spanning segment; that stretch reads LVNGVIKANLFISIFLVVAIS. At 132–150 the chain is on the cytoplasmic side; the sequence is RDRYRALVHPMATRRRRQA. A helical transmembrane segment spans residues 151–171; that stretch reads RATCVLIWVAGSLLSVPTFLF. Residues 172–204 are Extracellular-facing; sequence RSIEAVPELNNDSACVLLHPPGAWHVARMVELN. Asparagine 182 carries an N-linked (GlcNAc...) asparagine glycan. A helical transmembrane segment spans residues 205–225; that stretch reads VLGFLLPLAAIVFFNCHILAS. Topologically, residues 226-248 are cytoplasmic; the sequence is LRGRPEVRGARCGGPPDGRTTAL. The helical transmembrane segment at 249-269 threads the bilayer; it reads ILTFVAAFLVCWTPYHFFAFL. Topologically, residues 270–292 are extracellular; it reads EFLTQVQVVRGCFWENFKDLGLQ. The chain crosses the membrane as a helical span at residues 293–313; sequence YASFFAFINSCLNPVIYVFVG. Topologically, residues 314–350 are cytoplasmic; that stretch reads RLFRTRVWDLFKQCAPRRPPAVSWSHRKRVLQLFWQN. A lipid anchor (S-palmitoyl cysteine) is attached at cysteine 327.

This sequence belongs to the G-protein coupled receptor 1 family. Bradykinin receptor subfamily. BDKRB1 sub-subfamily.

Its subcellular location is the cell membrane. Functionally, this is a receptor for bradykinin. Could be a factor in chronic pain and inflammation. This Canis lupus familiaris (Dog) protein is B1 bradykinin receptor (BDKRB1).